A 331-amino-acid chain; its full sequence is Ribose-phosphate pyrophosphokinase (331 aa).

55–57 (DGE) contacts ATP. 2 residues coordinate Mg(2+): His148 and Asp187. Lys211 is a catalytic residue. Residues Arg213, Asp237, and 241 to 245 (DTAGT) contribute to the D-ribose 5-phosphate site.

This sequence belongs to the ribose-phosphate pyrophosphokinase family. Class I subfamily. Homohexamer. The cofactor is Mg(2+).

Its subcellular location is the cytoplasm. The enzyme catalyses D-ribose 5-phosphate + ATP = 5-phospho-alpha-D-ribose 1-diphosphate + AMP + H(+). It functions in the pathway metabolic intermediate biosynthesis; 5-phospho-alpha-D-ribose 1-diphosphate biosynthesis; 5-phospho-alpha-D-ribose 1-diphosphate from D-ribose 5-phosphate (route I): step 1/1. Its function is as follows. Involved in the biosynthesis of the central metabolite phospho-alpha-D-ribosyl-1-pyrophosphate (PRPP) via the transfer of pyrophosphoryl group from ATP to 1-hydroxyl of ribose-5-phosphate (Rib-5-P). This Synechococcus elongatus (strain ATCC 33912 / PCC 7942 / FACHB-805) (Anacystis nidulans R2) protein is Ribose-phosphate pyrophosphokinase.